A 61-amino-acid polypeptide reads, in one-letter code: Large ribosomal subunit protein uL30 (61 aa).

This sequence belongs to the universal ribosomal protein uL30 family. In terms of assembly, part of the 50S ribosomal subunit.

The polypeptide is Large ribosomal subunit protein uL30 (Chlorobaculum parvum (strain DSM 263 / NCIMB 8327) (Chlorobium vibrioforme subsp. thiosulfatophilum)).